Here is a 637-residue protein sequence, read N- to C-terminus: MAETAEPEGGAPSPQGPPEGSALLEERPGEPDPAGPEASEGAAKAPSGEGAGAAAKAGATEEASGGRDGEGAGEQAPDAGTESGGETPDAKGAQIEAEGAPEGTKAPQLGEEGSGGKQVEESGPDCELRGEAAREAEGQAAAPAAPGAQEEAVPGDSVDAEGSIDAGGSVDAAGSVDAGGSIDAGGSMDAGGSVDAGGSIDTGGSVDAAGSVDAGGSIDTGRNVDAGGSIDAGGSVDAGGSMDAEGPAGGAHGAGGEPQDLGAGSPQPRSEAVEVAAAENEGHSPGESVEDAAAEEAAGTREPEGSEDAAGEDGDQGRPQEETEQQAERQEPGPETQSEEEERPPDRSPDGEAAASTRAAQPEAELSNHLAAEEGGQRGEGPANGRGEDGEASEEGDPGQEHDITLFVKAGYDGESIGNCPFSQRLFMILWLKGVIFNVTTVDLKRKPADLQNLAPGTNPPFMTFDGDVKTDVNKIEEFLEEKLAPPRYPKLATQHPESNSAGNDVFAKFSAFIKNTKKDANEIYEKSLLKALKKLDAYLNSPLPDEVDAYSTEDVAVSGRKFLDGDDLTLADCNLLPKLHIIKIVAKKYRDFEFPPEMTGIWRYLNNAYARDEFINTCPADQEIEHAYSDVAKRMK.

A disordered region spans residues 1–400 (MAETAEPEGG…EASEEGDPGQ (400 aa)). Over residues 35–63 (GPEASEGAAKAPSGEGAGAAAKAGATEEA) the composition is skewed to low complexity. S39 is modified (phosphoserine). Residues 126-137 (CELRGEAAREAE) are compositionally biased toward basic and acidic residues. The segment covering 138 to 152 (GQAAAPAAPGAQEEA) has biased composition (low complexity). 15 tandem repeats follow at residues 155–160 (GDSVDA), 161–166 (EGSIDA), 167–172 (GGSVDA), 173–178 (AGSVDA), 179–184 (GGSIDA), 185–190 (GGSMDA), 191–196 (GGSVDA), 197–202 (GGSIDT), 203–208 (GGSVDA), 209–214 (AGSVDA), 215–220 (GGSIDT), 221–226 (GRNVDA), 227–232 (GGSIDA), 233–238 (GGSVDA), and 239–244 (GGSMDA). The segment at 155-244 (GDSVDAEGSI…SVDAGGSMDA (90 aa)) is 15 X 6 AA tandem repeat of [GEA]-[DGR]-[SN]-[VIM]-D-[AT]. The span at 247–256 (PAGGAHGAGG) shows a compositional bias: gly residues. Positions 305–314 (GSEDAAGEDG) are enriched in acidic residues. Residues 315 to 332 (DQGRPQEETEQQAERQEP) are compositionally biased toward basic and acidic residues. S348 and S393 each carry phosphoserine. A G-site motif is present at residues 420 to 423 (CPFS). The chain crosses the membrane as a helical span at residues 422 to 442 (FSQRLFMILWLKGVIFNVTTV). One can recognise a GST C-terminal domain in the interval 466–637 (DGDVKTDVNK…AYSDVAKRMK (172 aa)).

Belongs to the chloride channel CLIC family. As to quaternary structure, monomer (soluble state). Interacts with dopamine receptors DRD2, DRD3 and DRD4. Post-translationally, phosphorylated. As to expression, expressed in brain, chorioretinal, lacrimal glands, submandibular glands, airway epithelium, kidney and gastric mucosa, where it is preferentially expressed in cells that secrete or transport water. In brain, it is highly expressed in choroid plexus. Not detected in pancreas, adrenal glands, heart, skeletal muscle, ileal mucosa, liver and lung.

Its subcellular location is the cytoplasm. It is found in the cell membrane. The enzyme catalyses chloride(in) = chloride(out). Channel activity is redox- and pH-regulated. Inhibited by IAA-94. In the soluble state, catalyzes glutaredoxin-like thiol disulfide exchange reactions with reduced glutathione as electron donor. Can insert into membranes and form voltage-dependent chloride-selective channels. The channel opens upon membrane depolarization at positive voltages and closes at negative membrane voltages. May play a critical role in water-secreting cells, possibly through the regulation of chloride ion transport. This chain is Chloride intracellular channel protein 6 (CLIC6), found in Oryctolagus cuniculus (Rabbit).